We begin with the raw amino-acid sequence, 386 residues long: Probable mannan endo-1,4-beta-mannosidase A (386 aa).

Residues 1-21 form the signal peptide; sequence MKLNPSLLTAAGLVSAQLASA. Substrate-binding residues include Trp-95 and Asn-207. Glu-208 functions as the Proton donor in the catalytic mechanism. Residue Tyr-283 participates in substrate binding. The Nucleophile role is filled by Glu-316. N-linked (GlcNAc...) asparagine glycosylation is present at Asn-336. Trp-346 is a binding site for substrate.

The protein belongs to the glycosyl hydrolase 5 (cellulase A) family.

The protein localises to the secreted. It catalyses the reaction Random hydrolysis of (1-&gt;4)-beta-D-mannosidic linkages in mannans, galactomannans and glucomannans.. In terms of biological role, endo-1,4-mannanase, a crucial enzyme for depolymerization of seed galactomannans and wood galactoglucomannans. This chain is Probable mannan endo-1,4-beta-mannosidase A (manA), found in Aspergillus flavus (strain ATCC 200026 / FGSC A1120 / IAM 13836 / NRRL 3357 / JCM 12722 / SRRC 167).